Reading from the N-terminus, the 301-residue chain is Lipoyl synthase (301 aa).

[4Fe-4S] cluster-binding residues include C53, C58, C64, C79, C83, C86, and S290. Residues 65-279 form the Radical SAM core domain; the sequence is WSRKTATYML…RIYGKSIGFK (215 aa).

Belongs to the radical SAM superfamily. Lipoyl synthase family. Requires [4Fe-4S] cluster as cofactor.

Its subcellular location is the cytoplasm. The enzyme catalyses [[Fe-S] cluster scaffold protein carrying a second [4Fe-4S](2+) cluster] + N(6)-octanoyl-L-lysyl-[protein] + 2 oxidized [2Fe-2S]-[ferredoxin] + 2 S-adenosyl-L-methionine + 4 H(+) = [[Fe-S] cluster scaffold protein] + N(6)-[(R)-dihydrolipoyl]-L-lysyl-[protein] + 4 Fe(3+) + 2 hydrogen sulfide + 2 5'-deoxyadenosine + 2 L-methionine + 2 reduced [2Fe-2S]-[ferredoxin]. The protein operates within protein modification; protein lipoylation via endogenous pathway; protein N(6)-(lipoyl)lysine from octanoyl-[acyl-carrier-protein]: step 2/2. In terms of biological role, catalyzes the radical-mediated insertion of two sulfur atoms into the C-6 and C-8 positions of the octanoyl moiety bound to the lipoyl domains of lipoate-dependent enzymes, thereby converting the octanoylated domains into lipoylated derivatives. The polypeptide is Lipoyl synthase (Leptospira interrogans serogroup Icterohaemorrhagiae serovar Lai (strain 56601)).